The following is a 486-amino-acid chain: Glutamyl-tRNA(Gln) amidotransferase subunit A (486 aa).

Catalysis depends on charge relay system residues lysine 77 and serine 152. Serine 176 (acyl-ester intermediate) is an active-site residue.

This sequence belongs to the amidase family. GatA subfamily. In terms of assembly, heterotrimer of A, B and C subunits.

It carries out the reaction L-glutamyl-tRNA(Gln) + L-glutamine + ATP + H2O = L-glutaminyl-tRNA(Gln) + L-glutamate + ADP + phosphate + H(+). In terms of biological role, allows the formation of correctly charged Gln-tRNA(Gln) through the transamidation of misacylated Glu-tRNA(Gln) in organisms which lack glutaminyl-tRNA synthetase. The reaction takes place in the presence of glutamine and ATP through an activated gamma-phospho-Glu-tRNA(Gln). In Pediococcus pentosaceus (strain ATCC 25745 / CCUG 21536 / LMG 10740 / 183-1w), this protein is Glutamyl-tRNA(Gln) amidotransferase subunit A.